We begin with the raw amino-acid sequence, 127 residues long: Large ribosomal subunit protein uL22c (127 aa).

Belongs to the universal ribosomal protein uL22 family. Part of the 50S ribosomal subunit.

The protein localises to the plastid. The protein resides in the chloroplast. In terms of biological role, this protein binds specifically to 23S rRNA. Its function is as follows. The globular domain of the protein is located near the polypeptide exit tunnel on the outside of the subunit, while an extended beta-hairpin is found that lines the wall of the exit tunnel in the center of the 70S ribosome. This chain is Large ribosomal subunit protein uL22c (rpl22), found in Acorus calamus var. americanus (American sweet flag).